A 173-amino-acid polypeptide reads, in one-letter code: ATP-dependent protease subunit HslV (173 aa).

Threonine 2 is an active-site residue. Residues glycine 158, aspartate 161, and threonine 164 each contribute to the Na(+) site.

Belongs to the peptidase T1B family. HslV subfamily. In terms of assembly, a double ring-shaped homohexamer of HslV is capped on each side by a ring-shaped HslU homohexamer. The assembly of the HslU/HslV complex is dependent on binding of ATP.

The protein resides in the cytoplasm. The catalysed reaction is ATP-dependent cleavage of peptide bonds with broad specificity.. With respect to regulation, allosterically activated by HslU binding. Functionally, protease subunit of a proteasome-like degradation complex believed to be a general protein degrading machinery. In Mannheimia succiniciproducens (strain KCTC 0769BP / MBEL55E), this protein is ATP-dependent protease subunit HslV.